The following is an 806-amino-acid chain: Phenylalanine--tRNA ligase beta subunit (806 aa).

The region spanning 40–155 is the tRNA-binding domain; it reads NKGVKGVVVG…SDAEVGADAL (116 aa). The 76-residue stretch at 409–484 folds into the B5 domain; sequence VQERTVSVTA…RLYGYDHIPV (76 aa). 4 residues coordinate Mg(2+): aspartate 462, aspartate 468, glutamate 471, and glutamate 472. The region spanning 712–805 is the FDX-ACB domain; the sequence is PRFPSMTRDM…VEEKFGAELR (94 aa).

It belongs to the phenylalanyl-tRNA synthetase beta subunit family. Type 1 subfamily. Tetramer of two alpha and two beta subunits. Mg(2+) serves as cofactor.

Its subcellular location is the cytoplasm. It catalyses the reaction tRNA(Phe) + L-phenylalanine + ATP = L-phenylalanyl-tRNA(Phe) + AMP + diphosphate + H(+). The chain is Phenylalanine--tRNA ligase beta subunit from Bacillus thuringiensis subsp. konkukian (strain 97-27).